Here is an 87-residue protein sequence, read N- to C-terminus: UPF0213 protein SYNAS_10430 (87 aa).

Positions 2 to 78 (SKNYVYILEC…KKMSRAEKLQ (77 aa)) constitute a GIY-YIG domain.

Belongs to the UPF0213 family.

The polypeptide is UPF0213 protein SYNAS_10430 (Syntrophus aciditrophicus (strain SB)).